Here is a 619-residue protein sequence, read N- to C-terminus: 1-deoxy-D-xylulose-5-phosphate synthase (619 aa).

Residues H80 and 121–123 (GHS) contribute to the thiamine diphosphate site. Residue D152 participates in Mg(2+) binding. Thiamine diphosphate-binding positions include 153–154 (GA), N181, Y288, and E370. A Mg(2+)-binding site is contributed by N181.

This sequence belongs to the transketolase family. DXPS subfamily. Homodimer. Mg(2+) serves as cofactor. The cofactor is thiamine diphosphate.

It catalyses the reaction D-glyceraldehyde 3-phosphate + pyruvate + H(+) = 1-deoxy-D-xylulose 5-phosphate + CO2. It participates in metabolic intermediate biosynthesis; 1-deoxy-D-xylulose 5-phosphate biosynthesis; 1-deoxy-D-xylulose 5-phosphate from D-glyceraldehyde 3-phosphate and pyruvate: step 1/1. Functionally, catalyzes the acyloin condensation reaction between C atoms 2 and 3 of pyruvate and glyceraldehyde 3-phosphate to yield 1-deoxy-D-xylulose-5-phosphate (DXP). This chain is 1-deoxy-D-xylulose-5-phosphate synthase, found in Yersinia pestis (strain Pestoides F).